Consider the following 376-residue polypeptide: ATP phosphoribosyltransferase regulatory subunit (376 aa).

The protein belongs to the class-II aminoacyl-tRNA synthetase family. HisZ subfamily. As to quaternary structure, heteromultimer composed of HisG and HisZ subunits.

It is found in the cytoplasm. It participates in amino-acid biosynthesis; L-histidine biosynthesis; L-histidine from 5-phospho-alpha-D-ribose 1-diphosphate: step 1/9. Its function is as follows. Required for the first step of histidine biosynthesis. May allow the feedback regulation of ATP phosphoribosyltransferase activity by histidine. This Brucella ovis (strain ATCC 25840 / 63/290 / NCTC 10512) protein is ATP phosphoribosyltransferase regulatory subunit.